A 316-amino-acid chain; its full sequence is Putative metal-binding protein TP_0034 (316 aa).

Positions 1 to 19 (MQRCSVVAALAGVVFLAQA) are cleaved as a signal peptide. Residues H68, H146, and H210 each contribute to the a divalent metal cation site.

The protein belongs to the bacterial solute-binding protein 9 family.

The protein resides in the periplasm. Functionally, part of an ATP-binding cassette (ABC) transport system involved in metal import. Binds a metal with high affinity and specificity and delivers it to the membrane permease for translocation into the cytoplasm. This Treponema pallidum (strain Nichols) protein is Putative metal-binding protein TP_0034.